A 195-amino-acid polypeptide reads, in one-letter code: ATP-dependent Clp protease proteolytic subunit (195 aa).

Ser-97 serves as the catalytic Nucleophile. His-122 is an active-site residue.

It belongs to the peptidase S14 family. In terms of assembly, fourteen ClpP subunits assemble into 2 heptameric rings which stack back to back to give a disk-like structure with a central cavity, resembling the structure of eukaryotic proteasomes.

It localises to the cytoplasm. It carries out the reaction Hydrolysis of proteins to small peptides in the presence of ATP and magnesium. alpha-casein is the usual test substrate. In the absence of ATP, only oligopeptides shorter than five residues are hydrolyzed (such as succinyl-Leu-Tyr-|-NHMec, and Leu-Tyr-Leu-|-Tyr-Trp, in which cleavage of the -Tyr-|-Leu- and -Tyr-|-Trp bonds also occurs).. Cleaves peptides in various proteins in a process that requires ATP hydrolysis. Has a chymotrypsin-like activity. Plays a major role in the degradation of misfolded proteins. This Lactobacillus acidophilus (strain ATCC 700396 / NCK56 / N2 / NCFM) protein is ATP-dependent Clp protease proteolytic subunit.